Here is a 77-residue protein sequence, read N- to C-terminus: uncharacterized protein (77 aa).

The disordered stretch occupies residues 53-77 (KRVSSEANKEKSDITELLRKQVRPD).

This is an uncharacterized protein from Escherichia coli (strain K12).